We begin with the raw amino-acid sequence, 68 residues long: MSTKTNIQKDWEQREFIEDMSINIQKIVEFLNKFELSTRNKLSDLNEKLTILDRQVDYLEATFKTVQE.

Residues 37–62 (STRNKLSDLNEKLTILDRQVDYLEAT) are a coiled coil.

It belongs to the BRK1 family. In terms of assembly, part of a Scar/WAVE complex containing brk1, scrA, abiA, pirA and napA. Interacts with scrA.

It localises to the cytoplasm. Its subcellular location is the cytoskeleton. Involved in regulation of actin and microtubule organization. The chain is Protein BRICK1 (brk1) from Dictyostelium discoideum (Social amoeba).